The following is a 677-amino-acid chain: Epithelial splicing regulatory protein 1 (677 aa).

RRM domains lie at 225–302, 326–406, and 445–525; these read TVVR…KATG, VIVR…RSTA, and DCVR…QCSA. Serine 543 bears the Phosphoserine mark. The residue at position 578 (arginine 578) is an Omega-N-methylarginine.

It belongs to the ESRP family.

Its subcellular location is the nucleus. MRNA splicing factor that regulates the formation of epithelial cell-specific isoforms. Specifically regulates the expression of FGFR2-IIIb, an epithelial cell-specific isoform of FGFR2. Also regulates the splicing of CD44, CTNND1, ENAH, 3 transcripts that undergo changes in splicing during the epithelial-to-mesenchymal transition (EMT). Acts by directly binding specific sequences in mRNAs. Binds the GU-rich sequence motifs in the ISE/ISS-3, a cis-element regulatory region present in the mRNA of FGFR2. Regulates splicing and expression of genes involved in inner ear development, auditory hair cell differentiation, and cell fate specification in the cochlear epithelium. The chain is Epithelial splicing regulatory protein 1 (Esrp1) from Rattus norvegicus (Rat).